The following is a 232-amino-acid chain: 2-C-methyl-D-erythritol 4-phosphate cytidylyltransferase (232 aa).

Belongs to the IspD/TarI cytidylyltransferase family. IspD subfamily.

It catalyses the reaction 2-C-methyl-D-erythritol 4-phosphate + CTP + H(+) = 4-CDP-2-C-methyl-D-erythritol + diphosphate. The protein operates within isoprenoid biosynthesis; isopentenyl diphosphate biosynthesis via DXP pathway; isopentenyl diphosphate from 1-deoxy-D-xylulose 5-phosphate: step 2/6. Its function is as follows. Catalyzes the formation of 4-diphosphocytidyl-2-C-methyl-D-erythritol from CTP and 2-C-methyl-D-erythritol 4-phosphate (MEP). This Synechococcus elongatus (strain ATCC 33912 / PCC 7942 / FACHB-805) (Anacystis nidulans R2) protein is 2-C-methyl-D-erythritol 4-phosphate cytidylyltransferase.